We begin with the raw amino-acid sequence, 75 residues long: Protein SlyX homolog (75 aa).

A disordered region spans residues 56–75 (KNMDSSNMEDPANEPPPPHY).

Belongs to the SlyX family.

The protein is Protein SlyX homolog of Vibrio parahaemolyticus serotype O3:K6 (strain RIMD 2210633).